The chain runs to 523 residues: 2-isopropylmalate synthase (523 aa).

The Pyruvate carboxyltransferase domain occupies 5–267 (VIIFDTTLRD…HTNINHHEIW (263 aa)). Residues Asp-14, His-202, His-204, and Asn-238 each coordinate Mn(2+). The tract at residues 392–523 (RLDYFSVQSG…QNKENNKETV (132 aa)) is regulatory domain.

The protein belongs to the alpha-IPM synthase/homocitrate synthase family. LeuA type 1 subfamily. In terms of assembly, homodimer. Requires Mn(2+) as cofactor.

It localises to the cytoplasm. The enzyme catalyses 3-methyl-2-oxobutanoate + acetyl-CoA + H2O = (2S)-2-isopropylmalate + CoA + H(+). The protein operates within amino-acid biosynthesis; L-leucine biosynthesis; L-leucine from 3-methyl-2-oxobutanoate: step 1/4. Its function is as follows. Catalyzes the condensation of the acetyl group of acetyl-CoA with 3-methyl-2-oxobutanoate (2-ketoisovalerate) to form 3-carboxy-3-hydroxy-4-methylpentanoate (2-isopropylmalate). The protein is 2-isopropylmalate synthase of Salmonella agona (strain SL483).